The sequence spans 325 residues: uncharacterized protein (325 aa).

A helical membrane pass occupies residues 67-87 (WIPFFLLFSSVVVLGGLWWLG).

The protein localises to the membrane. This is an uncharacterized protein from Synechocystis sp. (strain ATCC 27184 / PCC 6803 / Kazusa).